Reading from the N-terminus, the 305-residue chain is UDP-3-O-acyl-N-acetylglucosamine deacetylase (305 aa).

Zn(2+) is bound by residues H79, H238, and D242. H265 serves as the catalytic Proton donor.

The protein belongs to the LpxC family. It depends on Zn(2+) as a cofactor.

It catalyses the reaction a UDP-3-O-[(3R)-3-hydroxyacyl]-N-acetyl-alpha-D-glucosamine + H2O = a UDP-3-O-[(3R)-3-hydroxyacyl]-alpha-D-glucosamine + acetate. Its pathway is glycolipid biosynthesis; lipid IV(A) biosynthesis; lipid IV(A) from (3R)-3-hydroxytetradecanoyl-[acyl-carrier-protein] and UDP-N-acetyl-alpha-D-glucosamine: step 2/6. In terms of biological role, catalyzes the hydrolysis of UDP-3-O-myristoyl-N-acetylglucosamine to form UDP-3-O-myristoylglucosamine and acetate, the committed step in lipid A biosynthesis. The chain is UDP-3-O-acyl-N-acetylglucosamine deacetylase from Salmonella agona (strain SL483).